Here is a 478-residue protein sequence, read N- to C-terminus: PRAME family member 11 (478 aa).

One copy of the LRR 1; degenerate repeat lies at R99–C126. Residues H181–N205 form an LRR 2; degenerate repeat. An LRR 3; degenerate repeat occupies L206–H232. One copy of the LRR 4; degenerate repeat lies at L233 to K268. LRR repeat units follow at residues L269–L294, K295–K326, T327–L347, A351–R378, and C379–H403.

This sequence belongs to the PRAME family.

In Homo sapiens (Human), this protein is PRAME family member 11.